The sequence spans 477 residues: Bifunctional protein HldE (477 aa).

The tract at residues 1–319 (MKITLPPFDQ…RALQEQEQSG (319 aa)) is ribokinase. Residue 195–198 (NLAE) coordinates ATP. Residue Asp-264 is part of the active site. Residues 344–477 (MTNGCFDLLH…IERMQSAPDT (134 aa)) form a cytidylyltransferase region.

The protein in the N-terminal section; belongs to the carbohydrate kinase PfkB family. It in the C-terminal section; belongs to the cytidylyltransferase family. In terms of assembly, homodimer.

It catalyses the reaction D-glycero-beta-D-manno-heptose 7-phosphate + ATP = D-glycero-beta-D-manno-heptose 1,7-bisphosphate + ADP + H(+). The enzyme catalyses D-glycero-beta-D-manno-heptose 1-phosphate + ATP + H(+) = ADP-D-glycero-beta-D-manno-heptose + diphosphate. It participates in nucleotide-sugar biosynthesis; ADP-L-glycero-beta-D-manno-heptose biosynthesis; ADP-L-glycero-beta-D-manno-heptose from D-glycero-beta-D-manno-heptose 7-phosphate: step 1/4. Its pathway is nucleotide-sugar biosynthesis; ADP-L-glycero-beta-D-manno-heptose biosynthesis; ADP-L-glycero-beta-D-manno-heptose from D-glycero-beta-D-manno-heptose 7-phosphate: step 3/4. Catalyzes the phosphorylation of D-glycero-D-manno-heptose 7-phosphate at the C-1 position to selectively form D-glycero-beta-D-manno-heptose-1,7-bisphosphate. Its function is as follows. Catalyzes the ADP transfer from ATP to D-glycero-beta-D-manno-heptose 1-phosphate, yielding ADP-D-glycero-beta-D-manno-heptose. In Alkalilimnicola ehrlichii (strain ATCC BAA-1101 / DSM 17681 / MLHE-1), this protein is Bifunctional protein HldE.